The primary structure comprises 268 residues: Shikimate dehydrogenase (NADP(+)) (268 aa).

Shikimate is bound by residues 15 to 17 (SKS) and T60. Residue K64 is the Proton acceptor of the active site. The shikimate site is built by N85 and D101. NADP(+)-binding positions include 121–125 (GAGGS) and L208. Y210 lines the shikimate pocket. Residue G230 coordinates NADP(+).

The protein belongs to the shikimate dehydrogenase family. Homodimer.

The catalysed reaction is shikimate + NADP(+) = 3-dehydroshikimate + NADPH + H(+). It functions in the pathway metabolic intermediate biosynthesis; chorismate biosynthesis; chorismate from D-erythrose 4-phosphate and phosphoenolpyruvate: step 4/7. Involved in the biosynthesis of the chorismate, which leads to the biosynthesis of aromatic amino acids. Catalyzes the reversible NADPH linked reduction of 3-dehydroshikimate (DHSA) to yield shikimate (SA). The sequence is that of Shikimate dehydrogenase (NADP(+)) from Helicobacter hepaticus (strain ATCC 51449 / 3B1).